The sequence spans 114 residues: MWSMCWVLRAHLGLLFWVAVIELCAASGPATIMASDCCENSLSSARLPPDKLICGWYWTSTVYCRQKAVIFVTHSGRKVCGSPAKRRTRLLMEKHTEIPLAKRVALRAGKGLCP.

The N-terminal stretch at 1-26 is a signal peptide; that stretch reads MWSMCWVLRAHLGLLFWVAVIELCAA.

In terms of biological role, acts as a highly selective agonist for human lymphoactin receptor XCR1. This chain is Protein vCCL3 (K4.1), found in Human herpesvirus 8 type P (isolate GK18) (HHV-8).